We begin with the raw amino-acid sequence, 151 residues long: UPF0179 protein MJ1627 (151 aa).

The protein belongs to the UPF0179 family.

The sequence is that of UPF0179 protein MJ1627 from Methanocaldococcus jannaschii (strain ATCC 43067 / DSM 2661 / JAL-1 / JCM 10045 / NBRC 100440) (Methanococcus jannaschii).